The primary structure comprises 103 residues: MSQFTNVAITKEANIYFDGNVTSRSVHFADGTKKTLGIMLPGDYEFNTGAKELMEILSGDLEIQLVGEEWRKISAGESFEVPANSSFKLKIYKITDYCCSFLG.

It belongs to the nucleoside phosphorylase PpnP family.

It catalyses the reaction a purine D-ribonucleoside + phosphate = a purine nucleobase + alpha-D-ribose 1-phosphate. The catalysed reaction is adenosine + phosphate = alpha-D-ribose 1-phosphate + adenine. The enzyme catalyses cytidine + phosphate = cytosine + alpha-D-ribose 1-phosphate. It carries out the reaction guanosine + phosphate = alpha-D-ribose 1-phosphate + guanine. It catalyses the reaction inosine + phosphate = alpha-D-ribose 1-phosphate + hypoxanthine. The catalysed reaction is thymidine + phosphate = 2-deoxy-alpha-D-ribose 1-phosphate + thymine. The enzyme catalyses uridine + phosphate = alpha-D-ribose 1-phosphate + uracil. It carries out the reaction xanthosine + phosphate = alpha-D-ribose 1-phosphate + xanthine. Its function is as follows. Catalyzes the phosphorolysis of diverse nucleosides, yielding D-ribose 1-phosphate and the respective free bases. Can use uridine, adenosine, guanosine, cytidine, thymidine, inosine and xanthosine as substrates. Also catalyzes the reverse reactions. This chain is Pyrimidine/purine nucleoside phosphorylase, found in Chlorobium chlorochromatii (strain CaD3).